A 490-amino-acid chain; its full sequence is Glutamate--tRNA ligase (490 aa).

A 'HIGH' region motif is present at residues 9 to 19 (PSPTGLQHIGG). Residues 251–255 (KLSKR) carry the 'KMSKS' region motif. Residue Lys-254 coordinates ATP.

This sequence belongs to the class-I aminoacyl-tRNA synthetase family. Glutamate--tRNA ligase type 1 subfamily. As to quaternary structure, monomer.

Its subcellular location is the cytoplasm. It catalyses the reaction tRNA(Glu) + L-glutamate + ATP = L-glutamyl-tRNA(Glu) + AMP + diphosphate. Functionally, catalyzes the attachment of glutamate to tRNA(Glu) in a two-step reaction: glutamate is first activated by ATP to form Glu-AMP and then transferred to the acceptor end of tRNA(Glu). This Borreliella afzelii (strain PKo) (Borrelia afzelii) protein is Glutamate--tRNA ligase.